The primary structure comprises 271 residues: Zinc-finger homeodomain protein 8 (271 aa).

Residue S16 is modified to Phosphoserine. A ZF-HD dimerization-type; degenerate zinc finger spans residues 56–107 (YKECLKNHAAGIGGHALDGCGEFMPSPSFNSNDPASLTCAACGCHRNFHRRE). Positions 125–154 (HNRHQLPPPPPPHLAGIRSPDDDDSASPPP) are disordered. A DNA-binding region (homeobox) is located at residues 179 to 242 (RKRFRTKFSQ…NNKISGRSGA (64 aa)).

In terms of assembly, homo- and heterodimer with other ZFHD proteins. Interacts with MIF1, MIF2 and MIF3; these interactions prevent nuclear localization and DNA-binding to inhibit transcription regulation activity. Binds to ZHD1, ZHD2, ZHD4, ZHD10 and ZHD11. Interacts with HIPP30. As to expression, mostly expressed in flowers and inflorescence.

Its subcellular location is the nucleus. Its function is as follows. Putative transcription factor. The chain is Zinc-finger homeodomain protein 8 (ZHD8) from Arabidopsis thaliana (Mouse-ear cress).